The sequence spans 521 residues: MPTDPNSNPVSKAGLTPSSINSNISEVQPTTGLNTINAAAGVKVKETENLRANFTAKSSLPAGSEITCTPQSSPLLSSTPPTVSKSLIKAYPYLIALNKILGVLTWTDDTSYISVLLVTTATLFILYFENFVIYLGHLSIVGLIFLYSIFRSYVEKEQKKSPTLDDVVHCLTTVSVRADMLLFPVSSLNLTSADLRRLLFTSIFLSPGYILVCYLLFPPKTLLLILVIFFLTYHSSWSRVTRKLLWRSSIVRAFCFYNTGLIFESGNNEKSSLFKTAMNKTNKKLKEVTRKAGGKHSGPVRFTYVLYENQRRWLGVGWTPNLLSYERTPWTDEFLNEAESPDNFELPQLNDDSGMYWRWIDKTWRLDLTNDGALQLPSSKYKTTADPKPDEGFIYYDNTWKNPSTEDSFSKYTRRRRWIRTAELVSPGDDSSTDSASLPHSASETVGLTLPKSTSISDVQSVNASGNITTSAETAPDSAGTAKKRKSLRFDATSTVYEEGVSDLKNVKETLEGGATDKKEE.

Positions 1 to 26 are disordered; it reads MPTDPNSNPVSKAGLTPSSINSNISE. Asparagine 23 and asparagine 53 each carry an N-linked (GlcNAc...) asparagine glycan. The next 2 helical transmembrane spans lie at 111 to 128 and 133 to 150; these read SYIS…ILYF and IYLG…YSIF. A glycan (N-linked (GlcNAc...) asparagine) is linked at asparagine 189. The chain crosses the membrane as a helical span at residues 198 to 217; sequence LLFTSIFLSPGYILVCYLLF. Asparagine 279 carries an N-linked (GlcNAc...) asparagine glycan. Residues 425–446 are disordered; that stretch reads VSPGDDSSTDSASLPHSASETV. Polar residues predominate over residues 429-446; sequence DDSSTDSASLPHSASETV. N-linked (GlcNAc...) asparagine glycosylation is found at asparagine 463 and asparagine 467. Residues 465-486 form a disordered region; the sequence is SGNITTSAETAPDSAGTAKKRK.

Belongs to the PEX28-32 family. PEX32 subfamily.

The protein resides in the endoplasmic reticulum membrane. With PEX29, contributes to the formation of endoplasmic reticulum-mitochondria junctions which are important for mitochondrial function. Involved in lipid dropplets formation. The chain is Peroxisomal membrane protein PEX23 from Ogataea parapolymorpha (strain ATCC 26012 / BCRC 20466 / JCM 22074 / NRRL Y-7560 / DL-1) (Yeast).